Here is a 360-residue protein sequence, read N- to C-terminus: Cyclin-dependent kinase 10 (360 aa).

The region spanning 39-323 (FEKLNRIGEG…SGDCLESSYF (285 aa)) is the Protein kinase domain. Residues 45–53 (IGEGTYGIV) and K68 each bind ATP. D163 (proton acceptor) is an active-site residue. T196 carries the phosphothreonine modification. The disordered stretch occupies residues 334–360 (LMPTFPHHRNKRAAPAAAEGQSKRCRP).

The protein belongs to the protein kinase superfamily. CMGC Ser/Thr protein kinase family. CDC2/CDKX subfamily. Heterodimer with CCNQ, the interaction is required for kinase activity. Interacts with ETS2. Interacts with PRK2.

It is found in the cytoplasm. Its subcellular location is the cytoskeleton. It localises to the cilium basal body. The enzyme catalyses L-seryl-[protein] + ATP = O-phospho-L-seryl-[protein] + ADP + H(+). The catalysed reaction is L-threonyl-[protein] + ATP = O-phospho-L-threonyl-[protein] + ADP + H(+). In terms of biological role, cyclin-dependent kinase that phosphorylates the transcription factor ETS2 (in vitro) and positively controls its proteasomal degradation (in cells). Involved in the regulation of actin cytoskeleton organization through the phosphorylation of actin dynamics regulators such as PKN2. Is a negative regulator of ciliogenesis through phosphorylation of PKN2 and promotion of RhoA signaling. This chain is Cyclin-dependent kinase 10 (Cdk10), found in Mus musculus (Mouse).